The following is a 121-amino-acid chain: MGQVLSICSSKSKEKKVVNEKPTVKPKPAVNVQKPAKAITKASSPPRTGRKLAETGNTSNKEHLSPTEAARVAAEKRNIEKKKGNGKLGRQLEKERAKPMKEHLQDISTQRQQEREQIKWD.

The segment at 1 to 121 (MGQVLSICSS…QQEREQIKWD (121 aa)) is disordered. The N-myristoyl glycine moiety is linked to residue Gly-2. The S-palmitoyl cysteine moiety is linked to residue Cys-8. Composition is skewed to basic and acidic residues over residues 11–23 (KSKE…EKPT), 73–83 (AAEKRNIEKKK), 90–105 (RQLE…EHLQ), and 112–121 (QQEREQIKWD).

This sequence to yeast YGL108C. Post-translationally, myristoylated. The N-myristoylated protein is further palmitoylated.

The protein localises to the cytoplasm. It is found in the cytosol. This is an uncharacterized protein from Schizosaccharomyces pombe (strain 972 / ATCC 24843) (Fission yeast).